Consider the following 139-residue polypeptide: Putative nickel-responsive regulator (139 aa).

4 residues coordinate Ni(2+): His79, His90, His92, and Cys98.

It belongs to the transcriptional regulatory CopG/NikR family. Requires Ni(2+) as cofactor.

Functionally, transcriptional regulator. The chain is Putative nickel-responsive regulator from Anaeromyxobacter sp. (strain K).